We begin with the raw amino-acid sequence, 583 residues long: Arginine--tRNA ligase (583 aa).

The short motif at 121-131 (ANPTGPLHLGH) is the 'HIGH' region element.

Belongs to the class-I aminoacyl-tRNA synthetase family. Monomer.

It is found in the cytoplasm. It carries out the reaction tRNA(Arg) + L-arginine + ATP = L-arginyl-tRNA(Arg) + AMP + diphosphate. The sequence is that of Arginine--tRNA ligase (argS) from Aquifex aeolicus (strain VF5).